The primary structure comprises 336 residues: DNA repair protein Rad51 homolog (336 aa).

Residues 1-10 (MEKLTNVQAQ) show a composition bias toward polar residues. The tract at residues 1–20 (MEKLTNVQAQQEEEEEEGPL) is disordered. 124-131 (GEFRCGKT) provides a ligand contact to ATP.

The protein belongs to the RecA family. RAD51 subfamily. In terms of assembly, interacts with Rrp6; the interaction is required for the recruitment of spn-A to the DNA-damage response foci. Highly expressed in ovaries.

Its subcellular location is the nucleus. The protein resides in the cytoplasm. Functionally, plays an important role in homologous strand exchange, a key step in DNA repair through homologous recombination (HR). Binds to single and double-stranded DNA and exhibits DNA-dependent ATPase activity. Underwinds duplex DNA. Spindle genes are required for each of the symmetry-breaking steps that generate polarity during egg axis formation; oocyte positioning at the posterior of the cyst to generate the first AP polarity and inhibition of gurken (grk) signaling to the follicle cell layer to polarize first the AP axis and then DV axis. May have a role in female meiosis. This chain is DNA repair protein Rad51 homolog (spn-A), found in Drosophila melanogaster (Fruit fly).